The chain runs to 145 residues: Brain and acute leukemia cytoplasmic protein (145 aa).

Gly2 carries N-myristoyl glycine lipidation. Cys3 carries S-palmitoyl cysteine lipidation. Residues 3–35 (CGGSRADAIEPRYYESWTRETESTWLTYTDSDA) are interaction with CAMK2A. The disordered stretch occupies residues 27–120 (WLTYTDSDAP…KRDAKRTSAK (94 aa)). Residues 83–106 (CGTQCPNPQSLGSGPLTQKQNGLR) show a composition bias toward polar residues. Basic and acidic residues predominate over residues 108-119 (TEAKRDAKRTSA).

In terms of assembly, interacts with CAMK2A. Palmitoylation and myristoylation target the protein to the lipid rafts. As to expression, expressed in the brain.

It localises to the cytoplasm. It is found in the synapse. The protein localises to the synaptosome. The protein resides in the membrane raft. Its subcellular location is the postsynaptic density. Its function is as follows. May play a synaptic role at the postsynaptic lipid rafts possibly through interaction with CAMK2A. The chain is Brain and acute leukemia cytoplasmic protein (BAALC) from Sus scrofa (Pig).